A 266-amino-acid polypeptide reads, in one-letter code: ATP synthase subunit a (266 aa).

Transmembrane regions (helical) follow at residues 28-48 (ISFT…AIFM), 90-110 (LIFT…VPLF), 125-145 (VTVT…VGFT), 158-178 (HGTP…SFIL), 187-207 (LFVA…FIVN), 216-236 (AFLA…MIGI), and 239-259 (LEFL…SLYL).

Belongs to the ATPase A chain family. F-type ATPases have 2 components, CF(1) - the catalytic core - and CF(0) - the membrane proton channel. CF(1) has five subunits: alpha(3), beta(3), gamma(1), delta(1), epsilon(1). CF(0) has three main subunits: a(1), b(2) and c(9-12). The alpha and beta chains form an alternating ring which encloses part of the gamma chain. CF(1) is attached to CF(0) by a central stalk formed by the gamma and epsilon chains, while a peripheral stalk is formed by the delta and b chains.

It localises to the cell inner membrane. In terms of biological role, key component of the proton channel; it plays a direct role in the translocation of protons across the membrane. The sequence is that of ATP synthase subunit a from Zymomonas mobilis subsp. mobilis (strain ATCC 31821 / ZM4 / CP4).